Here is a 418-residue protein sequence, read N- to C-terminus: Probable serine hydroxymethyltransferase (418 aa).

Residues Leu118 and 122 to 124 contribute to the (6S)-5,6,7,8-tetrahydrofolate site; that span reads GHL. Lys226 carries the N6-(pyridoxal phosphate)lysine modification. Residue 351–353 participates in (6S)-5,6,7,8-tetrahydrofolate binding; sequence SPF.

This sequence belongs to the SHMT family. In terms of assembly, homodimer. Pyridoxal 5'-phosphate serves as cofactor.

Its subcellular location is the cytoplasm. The catalysed reaction is (6R)-5,10-methylene-5,6,7,8-tetrahydrofolate + glycine + H2O = (6S)-5,6,7,8-tetrahydrofolate + L-serine. It participates in one-carbon metabolism; tetrahydrofolate interconversion. Catalyzes the reversible interconversion of serine and glycine with tetrahydrofolate (THF) serving as the one-carbon carrier. This reaction serves as the major source of one-carbon groups required for the biosynthesis of purines, thymidylate, methionine, and other important biomolecules. The polypeptide is Probable serine hydroxymethyltransferase (Mesomycoplasma hyopneumoniae (strain 7448) (Mycoplasma hyopneumoniae)).